We begin with the raw amino-acid sequence, 215 residues long: Ribonuclease T (215 aa).

The region spanning 20-194 (VVIDVETAGF…YDTEQTAQLF (175 aa)) is the Exonuclease domain. Mg(2+)-binding residues include Asp23, Glu25, His181, and Asp186. His181 acts as the Proton donor/acceptor in catalysis.

Belongs to the RNase T family. Homodimer. Mg(2+) serves as cofactor.

In terms of biological role, trims short 3' overhangs of a variety of RNA species, leaving a one or two nucleotide 3' overhang. Responsible for the end-turnover of tRNA: specifically removes the terminal AMP residue from uncharged tRNA (tRNA-C-C-A). Also appears to be involved in tRNA biosynthesis. This is Ribonuclease T from Klebsiella pneumoniae subsp. pneumoniae (strain ATCC 700721 / MGH 78578).